The primary structure comprises 120 residues: UPF0102 protein TWT_455 (120 aa).

The protein belongs to the UPF0102 family.

The chain is UPF0102 protein TWT_455 from Tropheryma whipplei (strain Twist) (Whipple's bacillus).